Consider the following 184-residue polypeptide: Photosystem I assembly protein Ycf4 (184 aa).

2 consecutive transmembrane segments (helical) span residues 19–39 (ISNF…LLVG) and 57–77 (IVFF…LFIS).

Belongs to the Ycf4 family.

It localises to the plastid. The protein resides in the chloroplast thylakoid membrane. In terms of biological role, seems to be required for the assembly of the photosystem I complex. The polypeptide is Photosystem I assembly protein Ycf4 (Nymphaea alba (White water-lily)).